The primary structure comprises 155 residues: Ribosomal RNA large subunit methyltransferase H (155 aa).

Residues glycine 104 and 123–128 (LGPMTF) contribute to the S-adenosyl-L-methionine site.

This sequence belongs to the RNA methyltransferase RlmH family. Homodimer.

It localises to the cytoplasm. The enzyme catalyses pseudouridine(1915) in 23S rRNA + S-adenosyl-L-methionine = N(3)-methylpseudouridine(1915) in 23S rRNA + S-adenosyl-L-homocysteine + H(+). Its function is as follows. Specifically methylates the pseudouridine at position 1915 (m3Psi1915) in 23S rRNA. This is Ribosomal RNA large subunit methyltransferase H from Nitratidesulfovibrio vulgaris (strain DSM 19637 / Miyazaki F) (Desulfovibrio vulgaris).